Consider the following 100-residue polypeptide: Aspartyl/glutamyl-tRNA(Asn/Gln) amidotransferase subunit C (100 aa).

Belongs to the GatC family. As to quaternary structure, heterotrimer of A, B and C subunits.

The enzyme catalyses L-glutamyl-tRNA(Gln) + L-glutamine + ATP + H2O = L-glutaminyl-tRNA(Gln) + L-glutamate + ADP + phosphate + H(+). The catalysed reaction is L-aspartyl-tRNA(Asn) + L-glutamine + ATP + H2O = L-asparaginyl-tRNA(Asn) + L-glutamate + ADP + phosphate + 2 H(+). Allows the formation of correctly charged Asn-tRNA(Asn) or Gln-tRNA(Gln) through the transamidation of misacylated Asp-tRNA(Asn) or Glu-tRNA(Gln) in organisms which lack either or both of asparaginyl-tRNA or glutaminyl-tRNA synthetases. The reaction takes place in the presence of glutamine and ATP through an activated phospho-Asp-tRNA(Asn) or phospho-Glu-tRNA(Gln). In Rickettsia canadensis (strain McKiel), this protein is Aspartyl/glutamyl-tRNA(Asn/Gln) amidotransferase subunit C.